Consider the following 863-residue polypeptide: Envelope glycoprotein gp160 (863 aa).

A signal peptide spans 1–31; the sequence is MRVMGIRMNYQHLWKWGIMLLGILMTCSVAE. Topologically, residues 32–691 are extracellular; the sequence is DLWVTVYYGV…ITKWLWYIKI (660 aa). A disulfide bridge links Cys53 with Cys73. N-linked (GlcNAc...) asparagine; by host glycans are attached at residues Asn87, Asn129, Asn136, Asn142, Asn143, Asn159, Asn163, Asn194, Asn199, Asn209, Asn246, Asn274, Asn288, Asn301, and Asn307. 5 cysteine pairs are disulfide-bonded: Cys118-Cys217, Cys125-Cys208, Cys130-Cys160, Cys230-Cys259, and Cys240-Cys251. The V1 stretch occupies residues 130-159; it reads CTNAGGNKTTNGNNTTNQEEQMMEKGEMKN. The tract at residues 160-208 is V2; the sequence is CSFNITTVISDKKKQVHALFYRLDVVPIDDDNSANTSNTNYTNYRLINC. Residues 308-341 are V3; that stretch reads CTRPDNKITRQSTPIGLGQALYTTRIKGDIRQAY. A disulfide bridge links Cys308 with Cys342. N-linked (GlcNAc...) asparagine; by host glycosylation is found at Asn343, Asn350, and Asn365. The CD4-binding loop stretch occupies residues 374–384; the sequence is PAGGDPEITTH. 2 disulfides stabilise this stretch: Cys388/Cys452 and Cys395/Cys425. Residues 395-425 are V4; it reads CNTSRLFNSTWNSSTWNNDTLNSEGTIKLPC. Asn396, Asn402, Asn406, Asn412, Asn455, Asn468, Asn469, and Asn472 each carry an N-linked (GlcNAc...) asparagine; by host glycan. V5 stretches follow at residues 467–478 and 470–478; these read VNNSTNETFRPG and STNETFRPG. The tract at residues 519-539 is fusion peptide; it reads AIGLGAVFLGFLGAAGSTMGA. Residues 581–599 are immunosuppression; the sequence is KQLQARVLAVESYLKDQQL. An intrachain disulfide couples Cys605 to Cys611. N-linked (GlcNAc...) asparagine; by host glycosylation is found at Asn618, Asn623, Asn632, and Asn644. Residues 640 to 674 are a coiled coil; that stretch reads REIDNYTGVIYSLIENSQIQQEKNEQDLLQLDKWA. Residues 669–690 are MPER; binding to GalCer; sequence QLDKWASLWNWFSITKWLWYIK. The chain crosses the membrane as a helical span at residues 692-712; the sequence is FIMIVGGLIGLRIVFTVLSLV. At 713 to 863 the chain is on the cytoplasmic side; it reads NRVRQGYSPL…VRQGLERALL (151 aa). The short motif at 719-722 is the YXXL motif; contains endocytosis signal element; that stretch reads YSPL. The interval 729–748 is disordered; sequence PAPRGPDRPEGIEEEGGEQG. Cys771 carries the S-palmitoyl cysteine; by host lipid modification. The Di-leucine internalization motif motif lies at 862-863; sequence LL.

This sequence belongs to the HIV-1 env protein family. The mature envelope protein (Env) consists of a homotrimer of non-covalently associated gp120-gp41 heterodimers. The resulting complex protrudes from the virus surface as a spike. There seems to be as few as 10 spikes on the average virion. Interacts with host CD4, CCR5 and CXCR4. Gp120 also interacts with the C-type lectins CD209/DC-SIGN and CLEC4M/DC-SIGNR (collectively referred to as DC-SIGN(R)). Gp120 and gp41 interact with GalCer. Gp120 interacts with host ITGA4/ITGB7 complex; on CD4+ T-cells, this interaction results in rapid activation of integrin ITGAL/LFA-1, which facilitates efficient cell-to-cell spreading of HIV-1. Gp120 interacts with cell-associated heparan sulfate; this interaction increases virus infectivity on permissive cells and may be involved in infection of CD4- cells. In terms of assembly, the mature envelope protein (Env) consists of a homotrimer of non-covalently associated gp120-gp41 heterodimers. The resulting complex protrudes from the virus surface as a spike. There seems to be as few as 10 spikes on the average virion. In terms of processing, highly glycosylated by host. The high number of glycan on the protein is reffered to as 'glycan shield' because it contributes to hide protein sequence from adaptive immune system. Post-translationally, palmitoylation of the transmembrane protein and of Env polyprotein (prior to its proteolytic cleavage) is essential for their association with host cell membrane lipid rafts. Palmitoylation is therefore required for envelope trafficking to classical lipid rafts, but not for viral replication. Specific enzymatic cleavages in vivo yield mature proteins. Envelope glycoproteins are synthesized as an inactive precursor that is heavily N-glycosylated and processed likely by host cell furin in the Golgi to yield the mature SU and TM proteins. The cleavage site between SU and TM requires the minimal sequence [KR]-X-[KR]-R. About 2 of the 9 disulfide bonds of gp41 are reduced by P4HB/PDI, following binding to CD4 receptor.

It is found in the virion membrane. The protein localises to the host cell membrane. It localises to the host endosome membrane. Functionally, oligomerizes in the host endoplasmic reticulum into predominantly trimers. In a second time, gp160 transits in the host Golgi, where glycosylation is completed. The precursor is then proteolytically cleaved in the trans-Golgi and thereby activated by cellular furin or furin-like proteases to produce gp120 and gp41. In terms of biological role, attaches the virus to the host lymphoid cell by binding to the primary receptor CD4. This interaction induces a structural rearrangement creating a high affinity binding site for a chemokine coreceptor like CXCR4 and/or CCR5. Acts as a ligand for CD209/DC-SIGN and CLEC4M/DC-SIGNR, which are respectively found on dendritic cells (DCs), and on endothelial cells of liver sinusoids and lymph node sinuses. These interactions allow capture of viral particles at mucosal surfaces by these cells and subsequent transmission to permissive cells. HIV subverts the migration properties of dendritic cells to gain access to CD4+ T-cells in lymph nodes. Virus transmission to permissive T-cells occurs either in trans (without DCs infection, through viral capture and transmission), or in cis (following DCs productive infection, through the usual CD4-gp120 interaction), thereby inducing a robust infection. In trans infection, bound virions remain infectious over days and it is proposed that they are not degraded, but protected in non-lysosomal acidic organelles within the DCs close to the cell membrane thus contributing to the viral infectious potential during DCs' migration from the periphery to the lymphoid tissues. On arrival at lymphoid tissues, intact virions recycle back to DCs' cell surface allowing virus transmission to CD4+ T-cells. Its function is as follows. Acts as a class I viral fusion protein. Under the current model, the protein has at least 3 conformational states: pre-fusion native state, pre-hairpin intermediate state, and post-fusion hairpin state. During fusion of viral and target intracellular membranes, the coiled coil regions (heptad repeats) assume a trimer-of-hairpins structure, positioning the fusion peptide in close proximity to the C-terminal region of the ectodomain. The formation of this structure appears to drive apposition and subsequent fusion of viral and target cell membranes. Complete fusion occurs in host cell endosomes and is dynamin-dependent, however some lipid transfer might occur at the plasma membrane. The virus undergoes clathrin-dependent internalization long before endosomal fusion, thus minimizing the surface exposure of conserved viral epitopes during fusion and reducing the efficacy of inhibitors targeting these epitopes. Membranes fusion leads to delivery of the nucleocapsid into the cytoplasm. The protein is Envelope glycoprotein gp160 of Human immunodeficiency virus type 1 group M subtype D (isolate Z84) (HIV-1).